Consider the following 119-residue polypeptide: Circadian clock oscillator protein KaiB (119 aa).

This sequence belongs to the KaiB family. As to quaternary structure, the KaiABC complex composition changes during the circadian cycle to control KaiC phosphorylation. Complexes KaiC(6), KaiA(2-4):KaiC(6), KaiB(6):KaiC(6) and KaiC(6):KaiB(6):KaiA(12) are among the most important forms, many form cooperatively. Undergoes a major conformational rearrangment; in the free state forms homotetramers as a dimer of dimers. When bound to the CI domain of KaiC switches to a monomeric thioredoxin-fold (KaiB(fs)). KaiB(fs) binds CikA, leading it to dephosphorylate phospho-RpaA.

Its function is as follows. Key component of the KaiABC oscillator complex, which constitutes the main circadian regulator in cyanobacteria. Complex composition changes during the circadian cycle to control KaiC phosphorylation. KaiA stimulates KaiC autophosphorylation, while KaiB sequesters KaiA, leading to KaiC autodephosphorylation. Phospho-Ser-431 KaiC accumulation triggers binding of KaiB to form the KaiB(6):KaiC(6) complex, leading to changes in output regulators CikA and SasA. KaiB switches to a thioredoxin-like fold (KaiB(fs)) when bound to KaiC. KaiB(6):KaiC(6) formation exposes a site for KaiA binding that sequesters KaiA from KaiC, making the KaiC(6):KaiB(6):KaiA(12) complex that results in KaiC autodephosphorylation. In terms of biological role, a metamorphic protein which reversibly switches between an inactive tetrameric fold and a rare, thioredoxin-like monomeric fold (KaiB(fs)). KaiB(fs) binds phospho-KaiC, KaiA and CikA. KaiA and CikA compete for binding to KaiB(fs), and KaiB(fs) and SasA compete for binding to KaiC, thus the clock oscillator and output signal pathway are tightly coupled. This chain is Circadian clock oscillator protein KaiB, found in Synechococcus sp. (strain CC9311).